The primary structure comprises 195 residues: ATP-dependent Clp protease proteolytic subunit (195 aa).

Ser-97 (nucleophile) is an active-site residue. The active site involves His-122.

It belongs to the peptidase S14 family. As to quaternary structure, fourteen ClpP subunits assemble into 2 heptameric rings which stack back to back to give a disk-like structure with a central cavity, resembling the structure of eukaryotic proteasomes.

Its subcellular location is the cytoplasm. The enzyme catalyses Hydrolysis of proteins to small peptides in the presence of ATP and magnesium. alpha-casein is the usual test substrate. In the absence of ATP, only oligopeptides shorter than five residues are hydrolyzed (such as succinyl-Leu-Tyr-|-NHMec, and Leu-Tyr-Leu-|-Tyr-Trp, in which cleavage of the -Tyr-|-Leu- and -Tyr-|-Trp bonds also occurs).. Functionally, cleaves peptides in various proteins in a process that requires ATP hydrolysis. Has a chymotrypsin-like activity. Plays a major role in the degradation of misfolded proteins. This chain is ATP-dependent Clp protease proteolytic subunit, found in Campylobacter hominis (strain ATCC BAA-381 / DSM 21671 / CCUG 45161 / LMG 19568 / NCTC 13146 / CH001A).